The following is a 360-amino-acid chain: D-alanine--D-alanine ligase (360 aa).

Positions 146–352 (KICAEHAGLH…FSQLIDRLLQ (207 aa)) constitute an ATP-grasp domain. 179-234 (LEEFTLPFFVKPASQGSSIGITKVHRPEELAAALEKAFMVDTKVLIEKTIEGREIE) lines the ATP pocket. 3 residues coordinate Mg(2+): Asp-305, Glu-319, and Asn-321.

This sequence belongs to the D-alanine--D-alanine ligase family. It depends on Mg(2+) as a cofactor. Requires Mn(2+) as cofactor.

It localises to the cytoplasm. It catalyses the reaction 2 D-alanine + ATP = D-alanyl-D-alanine + ADP + phosphate + H(+). Its pathway is cell wall biogenesis; peptidoglycan biosynthesis. In terms of biological role, cell wall formation. This chain is D-alanine--D-alanine ligase, found in Prosthecochloris aestuarii (strain DSM 271 / SK 413).